Reading from the N-terminus, the 138-residue chain is Gas vesicle protein A (138 aa).

The segment at 74–138 is disordered; the sequence is EAGPRKDPGL…STSRKKEEQE (65 aa). Positions 116–129 are enriched in low complexity; that stretch reads GSSSGSSSGSSSRS.

Belongs to the gas vesicle GvpA family. In terms of assembly, the gas vesicle shell is 2 nm thick and consists of a single layer of this protein. It forms helical ribs nearly perpendicular to the long axis of the vesicle.

Its subcellular location is the gas vesicle shell. Gas vesicles are hollow, gas filled proteinaceous nanostructures found in some microorganisms. During planktonic growth they allow positioning of the organism at a favorable depth for light or nutrient acquisition. GvpA forms the protein shell. It is not clear what function gas vesicles perform in soil bacteria. This is Gas vesicle protein A from Streptomyces sp. (strain CB03234).